The following is a 404-amino-acid chain: DNA polymerase processivity factor BMRF1 (404 aa).

A homodimerization; DNA binding and DNA polymerase processivity region spans residues 1–300 (METTQTLRFK…SVILFNHASE (300 aa)). The interval 301 to 404 (EAAASTASEP…KVKQAFNPLI (104 aa)) is transcriptional activation. Positions 302-404 (AAASTASEPE…KVKQAFNPLI (103 aa)) are disordered. Residues 335 to 344 (SPSPPPPPRT) show a composition bias toward pro residues. Ser-337 carries the phosphoserine modification. Thr-344 is modified (phosphothreonine). Ser-349 is subject to Phosphoserine. Thr-355 bears the Phosphothreonine mark.

It belongs to the herpesviridae DNA polymerase accessory subunit family. Homodimer. Two dimers can adopt a tetrameric ring-like structure. Forms a complex with the DNA-binding protein BALF2, the DNA polymerase subunit BALF5, and the alkaline exonuclease BGLF5. Interacts (via N-terminus) with BZLF1 (via bZIP domain); this interaction may inhibit BZLF1-induced transcription of the BMRF1 promoter. Interacts (via C-terminus) with host NuRD complex; this interaction is important for transcriptional activation of EBV promoters and inhibition of the ubiquitination step of DDR signaling. Phosphorylated by the viral BGLF4 kinase.

Its subcellular location is the virion tegument. It localises to the host nucleus. Its function is as follows. Acts as a DNA polymerase processivity factor; a transcriptional activator for several EBV promoters and inhibits the host DNA damage response (DDR) to double-stranded DNA breaks. Plays an essential role in the viral lytic DNA replication by acting as a polymerase accessory subunit. Stimulates the viral DNA polymerase activity and appears to function with it as a holoenzyme. Increases the processivity of the viral polymerase, probably by acting as a sliding clamp that prevents dissociation of the polymerase from the active template. In addition, BMRF1 transcriptionally activates the oriLyt early BHLF1 promoter. Promotes G1/S cell cycle arrest through p53 induction. This chain is DNA polymerase processivity factor BMRF1, found in Epstein-Barr virus (strain AG876) (HHV-4).